The chain runs to 21 residues: uncharacterized protein (21 aa).

This is an uncharacterized protein from Dictyostelium discoideum (Social amoeba).